Reading from the N-terminus, the 528-residue chain is Probable feruloyl esterase B-1 (528 aa).

Positions 1-19 are cleaved as a signal peptide; sequence MMWWFLLIGLASAAATASS. Disulfide bonds link Cys-29–Cys-78, Cys-64–Cys-117, Cys-190–Cys-445, Cys-259–Cys-276, Cys-285–Cys-295, and Cys-505–Cys-527. Asn-83 and Asn-101 each carry an N-linked (GlcNAc...) asparagine glycan. The active-site Acyl-ester intermediate is the Ser-191. Residues Asp-260, Asp-263, Ala-265, Asp-267, and Ile-269 each coordinate Ca(2+). 3 N-linked (GlcNAc...) asparagine glycosylation sites follow: Asn-286, Asn-354, and Asn-385. Residues Asp-404 and His-444 each act as charge relay system in the active site.

The protein belongs to the tannase family.

It is found in the secreted. The enzyme catalyses feruloyl-polysaccharide + H2O = ferulate + polysaccharide.. Its function is as follows. Involved in degradation of plant cell walls. Hydrolyzes the feruloyl-arabinose ester bond in arabinoxylans as well as the feruloyl-galactose and feruloyl-arabinose ester bonds in pectin. The polypeptide is Probable feruloyl esterase B-1 (faeB-1) (Aspergillus fumigatus (strain CBS 144.89 / FGSC A1163 / CEA10) (Neosartorya fumigata)).